Here is a 133-residue protein sequence, read N- to C-terminus: ATP synthase epsilon chain, chloroplastic (133 aa).

It belongs to the ATPase epsilon chain family. In terms of assembly, F-type ATPases have 2 components, CF(1) - the catalytic core - and CF(0) - the membrane proton channel. CF(1) has five subunits: alpha(3), beta(3), gamma(1), delta(1), epsilon(1). CF(0) has three main subunits: a, b and c.

It localises to the plastid. The protein localises to the chloroplast thylakoid membrane. Its function is as follows. Produces ATP from ADP in the presence of a proton gradient across the membrane. The sequence is that of ATP synthase epsilon chain, chloroplastic from Zygnema circumcarinatum (Green alga).